Reading from the N-terminus, the 466-residue chain is Chromosomal replication initiator protein DnaA (466 aa).

The interval 1-86 (MSLSLWQQCL…EVGTKPVTQT (86 aa)) is domain I, interacts with DnaA modulators. The segment at 86–129 (TLKTPVHNVVAPTQTTTAQPQRVAPAARSGWDNVPAPAEPTYRS) is domain II. Residues 130–346 (NVNVKHTFDN…GALNRVIANA (217 aa)) are domain III, AAA+ region. Positions 174, 176, 177, and 178 each coordinate ATP. Residues 347–466 (NFTGRAITID…FSNLIRTLSS (120 aa)) form a domain IV, binds dsDNA region.

The protein belongs to the DnaA family. In terms of assembly, oligomerizes as a right-handed, spiral filament on DNA at oriC.

It localises to the cytoplasm. In terms of biological role, plays an essential role in the initiation and regulation of chromosomal replication. ATP-DnaA binds to the origin of replication (oriC) to initiate formation of the DNA replication initiation complex once per cell cycle. Binds the DnaA box (a 9 base pair repeat at the origin) and separates the double-stranded (ds)DNA. Forms a right-handed helical filament on oriC DNA; dsDNA binds to the exterior of the filament while single-stranded (ss)DNA is stabiized in the filament's interior. The ATP-DnaA-oriC complex binds and stabilizes one strand of the AT-rich DNA unwinding element (DUE), permitting loading of DNA polymerase. After initiation quickly degrades to an ADP-DnaA complex that is not apt for DNA replication. Binds acidic phospholipids. The sequence is that of Chromosomal replication initiator protein DnaA from Salmonella choleraesuis (strain SC-B67).